The chain runs to 133 residues: Large ribosomal subunit protein uL15 (133 aa).

Positions 1 to 62 are disordered; the sequence is MALHNLQPAP…GQQPLQRRLP (62 aa). The span at 32–45 shows a compositional bias: polar residues; it reads TRGQKGQKSRTGYS.

It belongs to the universal ribosomal protein uL15 family. Part of the 50S ribosomal subunit.

Binds to the 23S rRNA. This is Large ribosomal subunit protein uL15 from Nitratiruptor sp. (strain SB155-2).